Consider the following 109-residue polypeptide: Thiosulfate sulfurtransferase GlpE (109 aa).

The Rhodanese domain maps to 16-104; sequence RSNGAVVVDI…WRATFPSETA (89 aa). Catalysis depends on cysteine 64, which acts as the Cysteine persulfide intermediate.

This sequence belongs to the GlpE family.

Its subcellular location is the cytoplasm. The enzyme catalyses thiosulfate + hydrogen cyanide = thiocyanate + sulfite + 2 H(+). It catalyses the reaction thiosulfate + [thioredoxin]-dithiol = [thioredoxin]-disulfide + hydrogen sulfide + sulfite + 2 H(+). Its function is as follows. Transferase that catalyzes the transfer of sulfur from thiosulfate to thiophilic acceptors such as cyanide or dithiols. May function in a CysM-independent thiosulfate assimilation pathway by catalyzing the conversion of thiosulfate to sulfite, which can then be used for L-cysteine biosynthesis. This chain is Thiosulfate sulfurtransferase GlpE, found in Ectopseudomonas mendocina (strain ymp) (Pseudomonas mendocina).